Consider the following 25-residue polypeptide: MVSEAIAALKEREGSSEFAIGKKKE.

Residues 1–25 (MVSEAIAALKEREGSSEFAIGKKKE) form the H15 domain. The tract at residues 1-25 (MVSEAIAALKEREGSSEFAIGKKKE) is disordered. Residues 9-25 (LKEREGSSEFAIGKKKE) are compositionally biased toward basic and acidic residues.

It is found in the nucleus. The protein localises to the chromosome. Histones H1 are necessary for the condensation of nucleosome chains into higher-order structures. The polypeptide is Histone H1.1 (Triticum aestivum (Wheat)).